We begin with the raw amino-acid sequence, 608 residues long: uncharacterized protein (608 aa).

The N-terminal stretch at 1–38 is a signal peptide; the sequence is MWLQQRLKVFPGLLSSSWARRVLAVSGFLVIIYWYIFS. Residues 39–563 lie on the Extracellular side of the membrane; that stretch reads GSLFRSFWYA…EEHMAKQYRG (525 aa). An N-linked (GlcNAc...) asparagine glycan is attached at asparagine 337. The helical transmembrane segment at 564 to 584 threads the bilayer; the sequence is LPFLFWFSVASLITLFHLFLF. The Cytoplasmic portion of the chain corresponds to 585–608; sequence KLIYNEYCGPGAKPLFRSKEDTSV.

It is found in the membrane. This is an uncharacterized protein from Xenopus tropicalis (Western clawed frog).